A 613-amino-acid polypeptide reads, in one-letter code: Leucine-rich repeat and immunoglobulin-like domain-containing nogo receptor-interacting protein 1 (613 aa).

The signal sequence occupies residues M1–G34. Disulfide bonds link C35–C41 and C39–C50. In terms of domain architecture, LRRNT spans C35–T64. The Extracellular portion of the chain corresponds to C35–T554. LRR repeat units lie at residues E65–N86, H89–N110, N113–G134, N137–D158, N161–G182, S185–H206, G209–R230, N257–H278, Y281–D302, R305–G326, and Y329–S350. A glycan (N-linked (GlcNAc...) asparagine) is linked at N137. N195 is a glycosylation site (N-linked (GlcNAc...) asparagine). N-linked (GlcNAc...) asparagine glycans are attached at residues N257, N267, and N286. N-linked (GlcNAc...) asparagine glycosylation occurs at N334. Residues N362–R416 form the LRRCT domain. Disulfide bonds link C366–C389, C368–C414, and C439–C490. Residues P404–R508 enclose the Ig-like C2-type domain. Residues N485, N498, N519, N530, and N535 are each glycosylated (N-linked (GlcNAc...) asparagine). Residues T555–W575 form a helical membrane-spanning segment. Over S576–I613 the chain is Cytoplasmic.

In terms of assembly, homotetramer. Forms ternary complex with RTN4R/NGFR and RTN4R/TNFRSF19. N-glycosylated. Contains predominantly high-mannose glycans.

Its subcellular location is the cell membrane. In terms of biological role, functional component of the Nogo receptor signaling complex (RTN4R/NGFR) in RhoA activation responsible for some inhibition of axonal regeneration by myelin-associated factors. Is also an important negative regulator of oligodentrocyte differentiation and axonal myelination. In Gallus gallus (Chicken), this protein is Leucine-rich repeat and immunoglobulin-like domain-containing nogo receptor-interacting protein 1 (LINGO1).